The sequence spans 164 residues: MPLLDSFKVDHTKMKAPGVRLAKVMQTPKGDNISVFDLRFCRPNHEIMSEKGTHTLEHLFAGFMREHLNSKDVEIIDISPMGCRTGFYMSLIGRPSETEVIKAFENSMKDVLKVTSQDDIPELNKFQCGSYKMHSLSEAKEIAQNVLNKGICIIKNDEIKLENF.

The Fe cation site is built by histidine 54, histidine 58, and cysteine 128.

The protein belongs to the LuxS family. In terms of assembly, homodimer. It depends on Fe cation as a cofactor.

The catalysed reaction is S-(5-deoxy-D-ribos-5-yl)-L-homocysteine = (S)-4,5-dihydroxypentane-2,3-dione + L-homocysteine. In terms of biological role, involved in the synthesis of autoinducer 2 (AI-2) which is secreted by bacteria and is used to communicate both the cell density and the metabolic potential of the environment. The regulation of gene expression in response to changes in cell density is called quorum sensing. Catalyzes the transformation of S-ribosylhomocysteine (RHC) to homocysteine (HC) and 4,5-dihydroxy-2,3-pentadione (DPD). This Campylobacter hominis (strain ATCC BAA-381 / DSM 21671 / CCUG 45161 / LMG 19568 / NCTC 13146 / CH001A) protein is S-ribosylhomocysteine lyase.